Consider the following 254-residue polypeptide: MLLVIDVGNSNIVLGIYDEERLVRDWRVSTDKSKTIDEYGILFHDLFRLADIVFTDVKDIIISSVVPTLTGVLEKLSRQYFKISPYVVGPGIKTGMPIHYDNPKEVGADRIVNAIAGFEKYRTALIIVDFGTATTFDYVNKKGEYCGGAIAPGLAISMEALFMKASKLPRVDIARPPSIIAKNTVNSMQAGIFFGYVGLVDGIVQRMKGEGKENPKVIATGGLASLIAPESVTIEEVDEFLTLEGLRIIYQRNK.

Residue 6–13 (DVGNSNIV) coordinates ATP. Residues Tyr-100 and 107-110 (GADR) contribute to the substrate site. Asp-109 acts as the Proton acceptor in catalysis. Asp-129 serves as a coordination point for K(+). Thr-132 contacts ATP. Thr-184 lines the substrate pocket.

The protein belongs to the type III pantothenate kinase family. As to quaternary structure, homodimer. The cofactor is NH4(+). Requires K(+) as cofactor.

The protein resides in the cytoplasm. It catalyses the reaction (R)-pantothenate + ATP = (R)-4'-phosphopantothenate + ADP + H(+). It functions in the pathway cofactor biosynthesis; coenzyme A biosynthesis; CoA from (R)-pantothenate: step 1/5. In terms of biological role, catalyzes the phosphorylation of pantothenate (Pan), the first step in CoA biosynthesis. The polypeptide is Type III pantothenate kinase (Citrifermentans bemidjiense (strain ATCC BAA-1014 / DSM 16622 / JCM 12645 / Bem) (Geobacter bemidjiensis)).